The following is a 152-amino-acid chain: Ribonuclease pancreatic (152 aa).

The signal sequence occupies residues 1–24 (MALDKSVILLPLLVLVLLVLGCLG). The substrate site is built by Lys-31 and Arg-34. The active-site Proton acceptor is the His-36. Asn-46 carries an N-linked (GlcNAc...) asparagine glycan. 4 disulfides stabilise this stretch: Cys-50–Cys-108, Cys-64–Cys-119, Cys-82–Cys-134, and Cys-89–Cys-96. Substrate contacts are provided by residues 65-69 (KPVNT), Lys-90, and Arg-109. Asn-112 carries N-linked (GlcNAc...) asparagine glycosylation. Catalysis depends on His-143, which acts as the Proton donor.

This sequence belongs to the pancreatic ribonuclease family. As to quaternary structure, monomer. Interacts with and forms tight 1:1 complexes with RNH1. Dimerization of two such complexes may occur. Interaction with RNH1 inhibits this protein.

It is found in the secreted. It catalyses the reaction an [RNA] containing cytidine + H2O = an [RNA]-3'-cytidine-3'-phosphate + a 5'-hydroxy-ribonucleotide-3'-[RNA].. It carries out the reaction an [RNA] containing uridine + H2O = an [RNA]-3'-uridine-3'-phosphate + a 5'-hydroxy-ribonucleotide-3'-[RNA].. Its function is as follows. Endonuclease that catalyzes the cleavage of RNA on the 3' side of pyrimidine nucleotides. Acts on single-stranded and double-stranded RNA. This chain is Ribonuclease pancreatic (RNASE1), found in Miopithecus talapoin (Angolan talapoin).